Here is a 467-residue protein sequence, read N- to C-terminus: Proton extrusion protein PxcA (467 aa).

Residues 183–205 (TSPPQLIRPRTEQNKKPRGKADT) form a disordered region. Positions 191 to 203 (PRTEQNKKPRGKA) are enriched in basic and acidic residues. 4 helical membrane passes run 249–269 (FILL…ALIV), 352–372 (IFSV…IMVL), 391–411 (IIIL…WEVI), and 427–447 (FIFL…KYWI).

It belongs to the CemA family.

The protein resides in the cell inner membrane. Its function is as follows. Required for H(+) efflux immediately after light irradiation to form a rapid H(+) concentration gradient across the thylakoid membranes. Together with PxcL, contributes to transient H(+) uptake following dark to light transition. This chain is Proton extrusion protein PxcA, found in Trichormus variabilis (strain ATCC 29413 / PCC 7937) (Anabaena variabilis).